A 119-amino-acid chain; its full sequence is Holo-[acyl-carrier-protein] synthase (119 aa).

The Mg(2+) site is built by aspartate 6 and glutamate 51.

This sequence belongs to the P-Pant transferase superfamily. AcpS family. The cofactor is Mg(2+).

Its subcellular location is the cytoplasm. It catalyses the reaction apo-[ACP] + CoA = holo-[ACP] + adenosine 3',5'-bisphosphate + H(+). Transfers the 4'-phosphopantetheine moiety from coenzyme A to a Ser of acyl-carrier-protein. The polypeptide is Holo-[acyl-carrier-protein] synthase (Sulfurovum sp. (strain NBC37-1)).